A 429-amino-acid polypeptide reads, in one-letter code: Multifunctional CCA protein (429 aa).

Glycine 27 and arginine 30 together coordinate ATP. Glycine 27 and arginine 30 together coordinate CTP. Positions 40 and 42 each coordinate Mg(2+). The ATP site is built by arginine 110, arginine 162, and arginine 165. Residues arginine 110, arginine 162, and arginine 165 each contribute to the CTP site. The 102-residue stretch at 251 to 352 (TGVHTMMVVD…VRLLERCDAL (102 aa)) folds into the HD domain.

It belongs to the tRNA nucleotidyltransferase/poly(A) polymerase family. Bacterial CCA-adding enzyme type 1 subfamily. As to quaternary structure, monomer. Can also form homodimers and oligomers. Mg(2+) is required as a cofactor. Ni(2+) serves as cofactor.

It carries out the reaction a tRNA precursor + 2 CTP + ATP = a tRNA with a 3' CCA end + 3 diphosphate. The enzyme catalyses a tRNA with a 3' CCA end + 2 CTP + ATP = a tRNA with a 3' CCACCA end + 3 diphosphate. Its function is as follows. Catalyzes the addition and repair of the essential 3'-terminal CCA sequence in tRNAs without using a nucleic acid template. Adds these three nucleotides in the order of C, C, and A to the tRNA nucleotide-73, using CTP and ATP as substrates and producing inorganic pyrophosphate. tRNA 3'-terminal CCA addition is required both for tRNA processing and repair. Also involved in tRNA surveillance by mediating tandem CCA addition to generate a CCACCA at the 3' terminus of unstable tRNAs. While stable tRNAs receive only 3'-terminal CCA, unstable tRNAs are marked with CCACCA and rapidly degraded. The protein is Multifunctional CCA protein of Ralstonia nicotianae (strain ATCC BAA-1114 / GMI1000) (Ralstonia solanacearum).